Consider the following 328-residue polypeptide: DNA-directed RNA polymerase subunit alpha (328 aa).

An alpha N-terminal domain (alpha-NTD) region spans residues 1-231 (MIYQMQMPAK…EHVTFFANFS (231 aa)). Residues 247–328 (DEFETMRRLL…MDITRYQMKG (82 aa)) form an alpha C-terminal domain (alpha-CTD) region.

Belongs to the RNA polymerase alpha chain family. In terms of assembly, homodimer. The RNAP catalytic core consists of 2 alpha, 1 beta, 1 beta' and 1 omega subunit. When a sigma factor is associated with the core the holoenzyme is formed, which can initiate transcription.

The enzyme catalyses RNA(n) + a ribonucleoside 5'-triphosphate = RNA(n+1) + diphosphate. Its function is as follows. DNA-dependent RNA polymerase catalyzes the transcription of DNA into RNA using the four ribonucleoside triphosphates as substrates. This Chlorobium luteolum (strain DSM 273 / BCRC 81028 / 2530) (Pelodictyon luteolum) protein is DNA-directed RNA polymerase subunit alpha.